Here is a 457-residue protein sequence, read N- to C-terminus: tRNA-2-methylthio-N(6)-dimethylallyladenosine synthase (457 aa).

Residues 3–120 (KKVYVKTFGC…LPQMIDQRRA (118 aa)) enclose the MTTase N-terminal domain. Cys12, Cys49, Cys83, Cys157, Cys161, and Cys164 together coordinate [4Fe-4S] cluster. In terms of domain architecture, Radical SAM core spans 143–377 (RVEGPSAFVS…QATIEENVAR (235 aa)). The TRAM domain occupies 380–447 (RSMVGKVERI…PHSLRGELLL (68 aa)).

This sequence belongs to the methylthiotransferase family. MiaB subfamily. As to quaternary structure, monomer. Requires [4Fe-4S] cluster as cofactor.

The protein resides in the cytoplasm. The enzyme catalyses N(6)-dimethylallyladenosine(37) in tRNA + (sulfur carrier)-SH + AH2 + 2 S-adenosyl-L-methionine = 2-methylsulfanyl-N(6)-dimethylallyladenosine(37) in tRNA + (sulfur carrier)-H + 5'-deoxyadenosine + L-methionine + A + S-adenosyl-L-homocysteine + 2 H(+). Functionally, catalyzes the methylthiolation of N6-(dimethylallyl)adenosine (i(6)A), leading to the formation of 2-methylthio-N6-(dimethylallyl)adenosine (ms(2)i(6)A) at position 37 in tRNAs that read codons beginning with uridine. The sequence is that of tRNA-2-methylthio-N(6)-dimethylallyladenosine synthase from Burkholderia ambifaria (strain ATCC BAA-244 / DSM 16087 / CCUG 44356 / LMG 19182 / AMMD) (Burkholderia cepacia (strain AMMD)).